The primary structure comprises 450 residues: Immunoglobulin G-binding protein A (450 aa).

Residues 1–36 form the signal peptide; sequence MKKKNIYSIRKLGVGIASVTLGTLLISGGVTPAANA. Positions 7–18 match the YSIRK-G/S signaling motif motif; sequence YSIRKLGVGIAS. An Immunoglobulin-binding region E repeat occupies 37 to 92; the sequence is AQHDEAQQNAFYQVLNMPNLNADQRNGFIQSLKDDPSQSANVLGEAQKLNDSQAPK. One copy of the Immunoglobulin-binding region D repeat lies at 93-153; it reads ADAQQNNFNK…KKLNESQAPK (61 aa). One copy of the Immunoglobulin-binding region A repeat lies at 154 to 211; the sequence is ADNNFNKEQQNAFYEILNMPNLNEEQRNGFIQSLKDDPSQSANLLSEAKKLNESQAPK. Residues 212-269 form an Immunoglobulin-binding region B/C repeat; the sequence is ADNKFNKEQQNAFYEILHLPNLNEEQRNGFIQSLKDDPSVSKEILAEAKKLNDAQAPK. Positions 260–354 are enriched in basic and acidic residues; sequence KKLNDAQAPK…GNKPGKEDGN (95 aa). Disordered stretches follow at residues 260 to 365 and 401 to 421; these read KKLN…GDTV and KKQP…ETGE. A run of 11 repeats spans residues 268–275, 276–283, 284–291, 292–299, 300–307, 308–315, 316–323, 324–331, 332–339, 340–347, and 348–355. A 12 X 8 AA approximate tandem repeats region spans residues 268 to 355; sequence PKEEDNKKPG…NKPGKEDGNG (88 aa). The LysM domain occupies 355 to 399; sequence GVHVVKPGDTVNDIAKANGTTADKIAADNKLADKNMIKPGQELVV. The LPXTG sorting signal signature appears at 416 to 420; it reads LPETG. Thr-419 carries the pentaglycyl murein peptidoglycan amidated threonine modification. A propeptide spans 420–450 (removed by sortase); the sequence is GEENPFIGTTVFGGLSLALGAALLAGRRREL.

It belongs to the immunoglobulin-binding protein SpA family. In terms of assembly, interacts with host TNFRSF1A; this interaction leads to the stimulation of both surface expression and shedding of TNFRSF1A.

The protein localises to the secreted. It is found in the cell wall. Its function is as follows. Plays a role in the inhibition of the host innate and adaptive immune responses. Possesses five immunoglobulin-binding domains that capture both the fragment crystallizable region (Fc region) and the Fab region (part of Ig that identifies antigen) of immunoglobulins. In turn, Staphylococcus aureus is protected from phagocytic killing via inhibition of Ig Fc region. In addition, the host elicited B-cell response is prevented due to a decrease of antibody-secreting cell proliferation that enter the bone marrow, thereby decreasing long-term antibody production. Inhibits osteogenesis by preventing osteoblast proliferation and expression of alkaline phosphatase, type I collagen, osteopontin and osteocalcin. Acts directly as a pro-inflammatory factor in the lung through its ability to bind and activate tumor necrosis factor alpha receptor 1/TNFRSF1A. The sequence is that of Immunoglobulin G-binding protein A (spa) from Staphylococcus aureus (strain Mu50 / ATCC 700699).